The chain runs to 461 residues: ATP synthase subunit beta (461 aa).

149-156 (GGAGVGKT) contributes to the ATP binding site.

It belongs to the ATPase alpha/beta chains family. In terms of assembly, F-type ATPases have 2 components, CF(1) - the catalytic core - and CF(0) - the membrane proton channel. CF(1) has five subunits: alpha(3), beta(3), gamma(1), delta(1), epsilon(1). CF(0) has three main subunits: a(1), b(2) and c(9-12). The alpha and beta chains form an alternating ring which encloses part of the gamma chain. CF(1) is attached to CF(0) by a central stalk formed by the gamma and epsilon chains, while a peripheral stalk is formed by the delta and b chains.

Its subcellular location is the cell membrane. It carries out the reaction ATP + H2O + 4 H(+)(in) = ADP + phosphate + 5 H(+)(out). In terms of biological role, produces ATP from ADP in the presence of a proton gradient across the membrane. The catalytic sites are hosted primarily by the beta subunits. The protein is ATP synthase subunit beta of Caldanaerobacter subterraneus subsp. tengcongensis (strain DSM 15242 / JCM 11007 / NBRC 100824 / MB4) (Thermoanaerobacter tengcongensis).